Consider the following 237-residue polypeptide: LexA repressor (237 aa).

Positions Phe26–Thr46 form a DNA-binding region, H-T-H motif. Active-site for autocatalytic cleavage activity residues include Ser158 and Lys196.

It belongs to the peptidase S24 family. In terms of assembly, homodimer.

It carries out the reaction Hydrolysis of Ala-|-Gly bond in repressor LexA.. Represses a number of genes involved in the response to DNA damage (SOS response), including recA and lexA. In the presence of single-stranded DNA, RecA interacts with LexA causing an autocatalytic cleavage which disrupts the DNA-binding part of LexA, leading to derepression of the SOS regulon and eventually DNA repair. The sequence is that of LexA repressor from Xanthobacter autotrophicus (strain ATCC BAA-1158 / Py2).